Consider the following 229-residue polypeptide: Vacuolar protein sorting-associated protein 24 homolog 1 (229 aa).

The stretch at 15–60 (KQLLRDWQRKLRQECRNIERQIRDIQKEERNVQKAIKEAAKRNDMV) forms a coiled coil. The segment at 193 to 215 (VPAQKASTSREEEAVAEGVDDEE) is disordered. The span at 206–215 (AVAEGVDDEE) shows a compositional bias: acidic residues.

The protein belongs to the SNF7 family. Component of the endosomal sorting required for transport complex III (ESCRT-III), composed at least of VPS2, VPS20, VPS24 and VPS32. Interacts with SKD1.

The protein resides in the endosome. In terms of biological role, component of the ESCRT-III complex, which is required for multivesicular bodies (MVBs) formation and sorting of endosomal cargo proteins into MVBs. The ESCRT-III complex is probably involved in the concentration of MVB cargo. The protein is Vacuolar protein sorting-associated protein 24 homolog 1 (VPS24-1) of Arabidopsis thaliana (Mouse-ear cress).